Reading from the N-terminus, the 510-residue chain is Peroxidase 2 (510 aa).

Residues 1–19 form the signal peptide; it reads MRLTYLPLFAGIAIQSASA. Positions 20–58 are excised as a propeptide; sequence LPDFFKSSVLKPRRTNSLLINPDAQPDLPTAQQASTAAA. Residue Asp-228 is the Proton acceptor of the active site. His-362 is a heme binding site.

As to quaternary structure, homodimer. Heme b is required as a cofactor.

Its function is as follows. Peroxidase capable of degrading beta-carotene. The chain is Peroxidase 2 from Mycetinis scorodonius (Garlic mushroom).